A 476-amino-acid polypeptide reads, in one-letter code: Protein transport protein Sec61 subunit alpha isoform B (476 aa).

Residues 2–33 (GIKFLEVIKPFCAVLPEIQKPERKIQFREKVL) are Cytoplasmic-facing. A helical transmembrane segment spans residues 34–53 (WTAITLFIFLVCCQIPLFGI). Residues 54 to 76 (MSSDSADPFYWMRVILASNRGTL) are Lumenal-facing. A helical transmembrane segment spans residues 77–96 (MELGISPIVTSGLIMQLLAG). The Cytoplasmic portion of the chain corresponds to 97–117 (AKIIEVGDTPKDRALFNGAQK). The chain crosses the membrane as a helical span at residues 118-138 (LFGMIITIGQAIVYVMTGMYG). The Lumenal portion of the chain corresponds to 139–144 (DPSDMG). Residues 145-165 (AGICLLIIIQLFVAGLIVLLL) traverse the membrane as a helical segment. The Cytoplasmic portion of the chain corresponds to 166–172 (DELLQKG). Residues 173–193 (YGLGSGISLFIATNICETIVW) form a helical membrane-spanning segment. Topologically, residues 194 to 240 (KAFSPTTVNTGRGTEFEGAIIALFHLLATRTDKVRALREAFYRQNLP) are lumenal. Residues 241 to 261 (NLMNLLATVFVFGVVIYFQGF) form a helical membrane-spanning segment. Residues 262-288 (RVDLPIKSARYRGQYNTYPIKLFYTSN) are Cytoplasmic-facing. Residues 289 to 309 (IPIILQSALVSNLYVISQMLS) traverse the membrane as a helical segment. The Lumenal portion of the chain corresponds to 310 to 354 (TRFSGNFLVNLLGTWSDTSSGGPARAYPVGGLCYYFSPPESFGSV). The helical transmembrane segment at 355–375 (LDDPIHAAIYICFMLGSCAFF) threads the bilayer. The Cytoplasmic segment spans residues 376–420 (SKTWIEVSGSSAKDVAKQLKEQQMVMRGHRETSMVHELNRYIPTA). The chain crosses the membrane as a helical span at residues 421-441 (AAFGGLCIGGLSVMADFLGAI). Topologically, residues 442-445 (GSGT) are lumenal. Residues 446 to 462 (GILLAVTIIYQYFEIFV) traverse the membrane as a helical segment. The Cytoplasmic portion of the chain corresponds to 463–476 (KEQSEMGSMGALLF).

This sequence belongs to the SecY/SEC61-alpha family. In terms of assembly, the SEC61 channel-forming translocon complex consists of channel-forming core components SEC61A1, SEC61B and SEC61G and different auxiliary components such as SEC62 and SEC63.

Its subcellular location is the endoplasmic reticulum membrane. Component of SEC61 channel-forming translocon complex that mediates transport of signal peptide-containing precursor polypeptides across the endoplasmic reticulum (ER). Forms a ribosome receptor and a gated pore in the ER membrane, both functions required for cotranslational translocation of nascent polypeptides. In Oncorhynchus mykiss (Rainbow trout), this protein is Protein transport protein Sec61 subunit alpha isoform B (sec61ab).